Reading from the N-terminus, the 189-residue chain is GTPase HRas (189 aa).

A GTP-binding site is contributed by 10–17 (GARGVGKS). Positions 32–40 (YDPTIEDSY) match the Effector region motif. GTP is bound by residues 57–61 (DTAGQ) and 116–119 (NKCD). Residues Cys-181 and Cys-184 are each lipidated (S-palmitoyl cysteine; by host). Cys-186 is modified (cysteine methyl ester; by host). Cys-186 is lipidated: S-farnesyl cysteine; by host. Positions 187 to 189 (VLS) are cleaved as a propeptide — removed in mature form.

It belongs to the small GTPase superfamily. Ras family.

The protein resides in the host cell membrane. It catalyses the reaction GTP + H2O = GDP + phosphate + H(+). Alternates between an inactive form bound to GDP and an active form bound to GTP. Activated by a guanine nucleotide-exchange factor (GEF) and inactivated by a GTPase-activating protein (GAP). This chain is GTPase HRas (H-RAS), found in Mus musculus (Mouse).